The primary structure comprises 804 residues: MIVTYNWLKEFVDFEMSPDELAHRLTMAGLEVDSMDFIGEGLDSVVTARLVSVDKHPDADKLTVCQVDYGQDTVQVVCGATNHKAGDVVALATVGTVLPGDFKIKKSKIRGMESFGMLCSEKELGLAQDSDGIMILSPDCEPGQPVFEVLGLKDVRYELGLTPNRPDCLSVLGVAREVSAMCGRSLNVNLPPLSEGDESTRALTSVTIEDAEYCPRYAARLIRGVKVGPSPDWLVRKLESVGQRSVNNVVDVTNFILMELGHPLHAFDYQRLAEGRIVVKRAASKEQFTTLDSVSRSLEKSDLVICDGQGAVALAGVMGGENSEVVAETVDILLESAYFNPLAIRRTSKRLSLRSEASHRFERGADIAMVPVALDKAAALIVQVAGGVVCKGMIDEFPRPLAERKVTLAVQRVNEILGLKLGMDDIQAHLLSIGLEVQPVEEKDIDRLVVTIPSFRPDLERDIDLVEEVARLNGYDNIPVTMPAGRMLCHLPPQHLREVKRLRDVMVAAGFNETVNYSFVAPEAWDRLELSDDDPRREPVKILNPLTEDQSVMRTSLVPSLLECVTRNVAYQNSDLHLFELRPVFLTHTDDVLPIEKWRLCAVLCGRREQEGWRQNDEKVDFYDLKGVVEQILDSFNVAKVTWDGSSSENFLHPGKSCTLKQKKTVLGTLGEVHPKVLAAFDIDQPVYLLDLDFEQLLMAAGGHGGFSALSRFPQVARDSAFLVDEDIPFSEISEVLNRSTGKLVEDIVLFDVYRGKGIPEGKKSLAIRVRYRSDDRTLKDEEIQKAHDKIVKALIAKLGAEIR.

Residues 39-147 (GEGLDSVVTA…PDCEPGQPVF (109 aa)) enclose the tRNA-binding domain. Residues 401–480 (LAERKVTLAV…RLNGYDNIPV (80 aa)) form the B5 domain. Mg(2+) is bound by residues D458, D464, E467, and E468. Residues 711-804 (SRFPQVARDS…LIAKLGAEIR (94 aa)) enclose the FDX-ACB domain.

This sequence belongs to the phenylalanyl-tRNA synthetase beta subunit family. Type 1 subfamily. Tetramer of two alpha and two beta subunits. Requires Mg(2+) as cofactor.

It localises to the cytoplasm. The enzyme catalyses tRNA(Phe) + L-phenylalanine + ATP = L-phenylalanyl-tRNA(Phe) + AMP + diphosphate + H(+). The protein is Phenylalanine--tRNA ligase beta subunit of Syntrophotalea carbinolica (strain DSM 2380 / NBRC 103641 / GraBd1) (Pelobacter carbinolicus).